The chain runs to 505 residues: Alpha-ketoglutarate-dependent dioxygenase FTO (505 aa).

T4 is subject to Phosphothreonine. Residues 32–327 (TPKDDEFYQQ…SSTHRVAECS (296 aa)) form a fe2OG dioxygenase domain region. Residues R96 and Y108 each contribute to the substrate site. N205 contacts 2-oxoglutarate. The loop L1; predicted to block binding of double-stranded DNA or RNA stretch occupies residues 213-224 (PYLKEEPYFGMG). An N6-acetyllysine modification is found at K216. Fe cation is bound by residues H231 and D233. Residue 231–234 (HHDE) coordinates substrate. Position 295 (Y295) interacts with 2-oxoglutarate. H307 contacts Fe cation. 2-oxoglutarate-binding positions include 316 to 318 (RFS), T320, and R322.

This sequence belongs to the fto family. Monomer. May also exist as homodimer. Fe(2+) serves as cofactor.

The protein localises to the nucleus. The protein resides in the nucleus speckle. It is found in the cytoplasm. The enzyme catalyses a 5'-end (N(7)-methyl 5'-triphosphoguanosine)-(N(6),2'-O-dimethyladenosine) in mRNA + 2-oxoglutarate + O2 = a 5'-end (N(7)-methyl 5'-triphosphoguanosine)-(2'-O-methyladenosine) in mRNA + formaldehyde + succinate + CO2. It carries out the reaction an N(6)-methyladenosine in mRNA + 2-oxoglutarate + O2 = an adenosine in mRNA + formaldehyde + succinate + CO2. The catalysed reaction is N(6)-methyladenosine in U6 snRNA + 2-oxoglutarate + O2 = adenosine in U6 snRNA + formaldehyde + succinate + CO2. It catalyses the reaction a 5'-end (N(7)-methyl 5'-triphosphoguanosine)-(N(6),2'-O-dimethyladenosine) in U6 snRNA + 2-oxoglutarate + O2 = a 5'-end (N(7)-methyl 5'-triphosphoguanosine)-(2'-O-methyladenosine) in U6 snRNA + formaldehyde + succinate + CO2. The enzyme catalyses an N(1)-methyladenosine in tRNA + 2-oxoglutarate + O2 = an adenosine in tRNA + formaldehyde + succinate + CO2. With respect to regulation, activated by ascorbate. Inhibited by N-oxalylglycine, fumarate and succinate. Functionally, RNA demethylase that mediates oxidative demethylation of different RNA species, such as mRNAs, tRNAs and snRNAs, and acts as a regulator of fat mass, adipogenesis and energy homeostasis. Specifically demethylates N(6)-methyladenosine (m6A) RNA, the most prevalent internal modification of messenger RNA (mRNA) in higher eukaryotes. M6A demethylation by FTO affects mRNA expression and stability. Also able to demethylate m6A in U6 small nuclear RNA (snRNA). Mediates demethylation of N(6),2'-O-dimethyladenosine cap (m6A(m)), by demethylating the N(6)-methyladenosine at the second transcribed position of mRNAs and U6 snRNA. Demethylation of m6A(m) in the 5'-cap by FTO affects mRNA stability by promoting susceptibility to decapping. Also acts as a tRNA demethylase by removing N(1)-methyladenine from various tRNAs. Has no activity towards 1-methylguanine. Has no detectable activity towards double-stranded DNA. Also able to repair alkylated DNA and RNA by oxidative demethylation: demethylates single-stranded RNA containing 3-methyluracil, single-stranded DNA containing 3-methylthymine and has low demethylase activity towards single-stranded DNA containing 1-methyladenine or 3-methylcytosine. Ability to repair alkylated DNA and RNA is however unsure in vivo. Involved in the regulation of fat mass, adipogenesis and body weight, thereby contributing to the regulation of body size and body fat accumulation. Involved in the regulation of thermogenesis and the control of adipocyte differentiation into brown or white fat cells. Regulates activity of the dopaminergic midbrain circuitry via its ability to demethylate m6A in mRNAs. The protein is Alpha-ketoglutarate-dependent dioxygenase FTO of Pongo abelii (Sumatran orangutan).